The following is a 175-amino-acid chain: Calcineurin subunit B (175 aa).

4 consecutive EF-hand domains span residues A21 to P56, A58 to R88, E90 to T125, and Q131 to I166. The Ca(2+) site is built by D34, D36, S38, S40, E45, D66, D68, S70, D72, E77, D103, D105, D107, Y109, E114, D144, D146, D148, K150, and E155.

Belongs to the calcineurin regulatory subunit family. In terms of assembly, composed of a catalytic subunit (A) and a regulatory subunit (B).

Regulatory subunit of calcineurin, a calcium-dependent, calmodulin stimulated protein phosphatase. Confers calcium sensitivity. In Kluyveromyces lactis (strain ATCC 8585 / CBS 2359 / DSM 70799 / NBRC 1267 / NRRL Y-1140 / WM37) (Yeast), this protein is Calcineurin subunit B (CNB1).